Here is a 374-residue protein sequence, read N- to C-terminus: MKLDELAAIRRDLHQIPELGFQEYKTQAYLLNHLAKHPEGRIEIEKWRTGLFVKVKGTAPEKILAYRADMDGLSIREDTGYSFSSVHQDRMHACGHDFHMTIALGIIDHFVRHPVKQDLLFLFQPAEEGPGGAEPMLESDLFKKWEPSMITALHIAPELPVGTIGTKSGLLFANTSELVIELEGKGGHAAYPHLAEDMVVAASSLVTQMQSIVARNVDPLDSAVITIGTITGGSAQNIIAQEARLEGTIRTLSPASMEQVKKRIEAMVRGLETAYQCSGKVSYPAAYYQVCNSSDLVEDFMQFVSENGLAEVVRSKEAMTGEDFGYMLKKYPGFMFWLGVDSPYGLHHAKLQPKEEALETAVRVMTAYFSSKAN.

D69 is an active-site residue. Catalysis depends on E128, which acts as the Proton acceptor.

This sequence belongs to the peptidase M20A family. N-acetyldiaminopimelate deacetylase subfamily.

It catalyses the reaction N-acetyl-(2S,6S)-2,6-diaminopimelate + H2O = (2S,6S)-2,6-diaminopimelate + acetate. The protein operates within amino-acid biosynthesis; L-lysine biosynthesis via DAP pathway; LL-2,6-diaminopimelate from (S)-tetrahydrodipicolinate (acetylase route): step 3/3. Functionally, catalyzes the conversion of N-acetyl-diaminopimelate to diaminopimelate and acetate. This chain is N-acetyldiaminopimelate deacetylase, found in Bacillus licheniformis (strain ATCC 14580 / DSM 13 / JCM 2505 / CCUG 7422 / NBRC 12200 / NCIMB 9375 / NCTC 10341 / NRRL NRS-1264 / Gibson 46).